A 489-amino-acid polypeptide reads, in one-letter code: 3-octaprenyl-4-hydroxybenzoate carboxy-lyase (489 aa).

Asn172 contacts Mn(2+). Residues 175–177, 189–191, and 194–195 each bind prenylated FMN; these read IYR, RWL, and RG. Glu238 serves as a coordination point for Mn(2+). Residue Asp287 is the Proton donor of the active site.

The protein belongs to the UbiD family. Homohexamer. Prenylated FMN is required as a cofactor. The cofactor is Mn(2+).

It localises to the cell membrane. It catalyses the reaction a 4-hydroxy-3-(all-trans-polyprenyl)benzoate + H(+) = a 2-(all-trans-polyprenyl)phenol + CO2. It participates in cofactor biosynthesis; ubiquinone biosynthesis. Catalyzes the decarboxylation of 3-octaprenyl-4-hydroxy benzoate to 2-octaprenylphenol, an intermediate step in ubiquinone biosynthesis. The chain is 3-octaprenyl-4-hydroxybenzoate carboxy-lyase from Klebsiella pneumoniae (strain 342).